A 177-amino-acid chain; its full sequence is Large ribosomal subunit protein uL6 (177 aa).

The disordered stretch occupies residues 151-177 (LRPPEPYKGKGVRYAGENVRRKEGKKK).

The protein belongs to the universal ribosomal protein uL6 family. In terms of assembly, part of the 50S ribosomal subunit.

Its function is as follows. This protein binds to the 23S rRNA, and is important in its secondary structure. It is located near the subunit interface in the base of the L7/L12 stalk, and near the tRNA binding site of the peptidyltransferase center. The polypeptide is Large ribosomal subunit protein uL6 (Phenylobacterium zucineum (strain HLK1)).